Here is a 424-residue protein sequence, read N- to C-terminus: FeMo cofactor biosynthesis protein NifB (424 aa).

Residues 12–261 (NDSSRHTYGR…PQMKHCARCR (250 aa)) form the Radical SAM core domain. C30, C34, and C37 together coordinate [4Fe-4S] cluster. Residues G84, T136, and V188 each contribute to the S-adenosyl-L-methionine site. 2 residues coordinate [4Fe-4S] cluster: C257 and C260.

This sequence belongs to the radical SAM superfamily. NifB family. In terms of assembly, monomer. The cofactor is [4Fe-4S] cluster.

It participates in cofactor biosynthesis; Fe-Mo cofactor biosynthesis. In terms of biological role, involved in the biosynthesis of the iron-molybdenum cofactor (FeMo-co or M-cluster) found in the dinitrogenase enzyme of the nitrogenase complex in nitrogen-fixing microorganisms. NifB catalyzes the crucial step of radical SAM-dependent carbide insertion that occurs concomitant with the insertion of a 9th sulfur and the rearrangement/coupling of two [4Fe-4S] clusters into a [8Fe-9S-C] cluster, the precursor to the M-cluster. In Chlorobaculum tepidum (strain ATCC 49652 / DSM 12025 / NBRC 103806 / TLS) (Chlorobium tepidum), this protein is FeMo cofactor biosynthesis protein NifB.